The sequence spans 217 residues: MSLATIAENYMMHNGNQRAIVPYVPPPYAYANAPTLGGQAGEMESMSLGILNQAMSSTTGASRALKDEKAAFGAMAEALRDPEPIRQIKKHVGLRTLKHLKIELASMRRRYAILRVVIFMSGCVTMATSMAGGLTIIDNEIYEDLSGDGWLSKTIHGLNLLCTTMLLAAGKISDKIQEEISRTKRDIAKRESYVSAASMSWSGDTSVLLKEVKYGDS.

Belongs to the orbivirus NS3 family.

In terms of biological role, may play a role in the release of virions from infected cells. This chain is Non-structural protein NS3 (Segment-10), found in African horse sickness virus (AHSV).